The primary structure comprises 231 residues: 26S proteasome non-ATPase regulatory subunit 10 (231 aa).

ANK repeat units follow at residues 3–36 (GCVS…ATRT), 37–69 (DQDS…VNEK), 70–102 (DDAG…VNAV), 103–135 (NQNG…PDAK), 136–168 (NHYD…TNIQ), 169–201 (DTEG…IYIE), and 202–226 (NKEE…IAES).

As to quaternary structure, part of transient complex containing PSMD10, PSMC4, PSMC5 and PAAF1 formed during the assembly of the 26S proteasome. Stays associated throughout the assembly of the PA700/19S RC and is released upon association with the 20S core. Interacts with PSMC4. Interacts with RB1. Interacts with CDK4. Interacts with MDM2. Interacts with RELA. Associates with a CDK4:CCND2 serine/threonine kinase complex. Interacts with ARHGDIA and increases the interaction between ARHGDIA and RHOA, hence promotes ARHGDIA inactivation of RHOA and ROCK.

It is found in the cytoplasm. It localises to the nucleus. Functionally, acts as a chaperone during the assembly of the 26S proteasome, specifically of the PA700/19S regulatory complex (RC). In the initial step of the base subcomplex assembly is part of an intermediate PSMD10:PSMC4:PSMC5:PAAF1 module which probably assembles with a PSMD5:PSMC2:PSMC1:PSMD2 module. Independently of the proteasome, regulates EGF-induced AKT activation through inhibition of the RHOA/ROCK/PTEN pathway, leading to prolonged AKT activation. Plays an important role in RAS-induced tumorigenesis. In terms of biological role, acts as an oncoprotein by being involved in negative regulation of tumor suppressors RB1 and p53/TP53. Overexpression is leading to phosphorylation of RB1 and proteasomal degradation of RB1. Regulates CDK4-mediated phosphorylation of RB1 by competing with CDKN2A for binding with CDK4. Facilitates binding of MDM2 to p53/TP53 and the mono- and polyubiquitination of p53/TP53 by MDM2 suggesting a function in targeting the TP53:MDM2 complex to the 26S proteasome. Involved in p53-independent apoptosis. Involved in regulation of NF-kappa-B by retaining it in the cytoplasm. Binds to the NF-kappa-B component RELA and accelerates its XPO1/CRM1-mediated nuclear export. The protein is 26S proteasome non-ATPase regulatory subunit 10 (Psmd10) of Rattus norvegicus (Rat).